Reading from the N-terminus, the 159-residue chain is RNA pyrophosphohydrolase (159 aa).

The Nudix hydrolase domain occupies 6–149 (GFRPNVGIIL…KREVYRRALK (144 aa)). The short motif at 38–59 (GGINPDETPEDALYRELNEEVG) is the Nudix box element.

Belongs to the Nudix hydrolase family. RppH subfamily. The cofactor is a divalent metal cation.

In terms of biological role, accelerates the degradation of transcripts by removing pyrophosphate from the 5'-end of triphosphorylated RNA, leading to a more labile monophosphorylated state that can stimulate subsequent ribonuclease cleavage. This is RNA pyrophosphohydrolase from Pseudomonas fluorescens (strain ATCC BAA-477 / NRRL B-23932 / Pf-5).